Consider the following 252-residue polypeptide: MGQKVNPTGFRLGIIKDWTSRWYDDSPVISGKIKEDHVIRNYVQTRLKREKAGIARIIIERTTKHIKINIYAARPGAVVGRKGEEINNLSQELGRITGKEVKIDVVEVVKPEIESQLIGESIAYQLENRVSFRRAMKMAIQQAMRAGAEGVRIRCAGRLGGAEIARAEQYKEGKIPLHTIRANVDYASVTAHTIAGTIGIKVWVYKGEVLNQRIDAIEEEEMKRIKERRSDSGPRSRNDRSQKRRRRPNDRG.

The 71-residue stretch at 39–109 folds into the KH type-2 domain; that stretch reads IRNYVQTRLK…EVKIDVVEVV (71 aa). Residues 221 to 241 show a composition bias toward basic and acidic residues; it reads EMKRIKERRSDSGPRSRNDRS. The disordered stretch occupies residues 221-252; sequence EMKRIKERRSDSGPRSRNDRSQKRRRRPNDRG. The segment covering 242–252 has biased composition (basic residues); it reads QKRRRRPNDRG.

Belongs to the universal ribosomal protein uS3 family. In terms of assembly, part of the 30S ribosomal subunit. Forms a tight complex with proteins S10 and S14.

Its function is as follows. Binds the lower part of the 30S subunit head. Binds mRNA in the 70S ribosome, positioning it for translation. The protein is Small ribosomal subunit protein uS3 of Chlorobium luteolum (strain DSM 273 / BCRC 81028 / 2530) (Pelodictyon luteolum).